The primary structure comprises 508 residues: Glutamyl-tRNA(Gln) amidotransferase subunit B, mitochondrial (508 aa).

It belongs to the GatB/GatE family. GatB subfamily. Subunit of the heterotrimeric GatFAB amidotransferase (AdT) complex, composed of A, B and F subunits.

The protein resides in the mitochondrion. It carries out the reaction L-glutamyl-tRNA(Gln) + L-glutamine + ATP + H2O = L-glutaminyl-tRNA(Gln) + L-glutamate + ADP + phosphate + H(+). Its function is as follows. Allows the formation of correctly charged Gln-tRNA(Gln) through the transamidation of misacylated Glu-tRNA(Gln) in the mitochondria. The reaction takes place in the presence of glutamine and ATP through an activated gamma-phospho-Glu-tRNA(Gln). This is Glutamyl-tRNA(Gln) amidotransferase subunit B, mitochondrial from Scheffersomyces stipitis (strain ATCC 58785 / CBS 6054 / NBRC 10063 / NRRL Y-11545) (Yeast).